The sequence spans 286 residues: Ribosome-inactivating protein momordin I (286 aa).

The first 23 residues, 1–23, serve as a signal peptide directing secretion; the sequence is MSRFSVLSFLILAIFLGGSIVKG. Residue E183 is part of the active site. A glycan (N-linked (GlcNAc...) asparagine) is linked at N250. A propeptide spans 270–286 (removed in mature form); the sequence is AEGDNGDVSTTHGFSSY.

It belongs to the ribosome-inactivating protein family. Type 1 RIP subfamily.

It carries out the reaction Endohydrolysis of the N-glycosidic bond at one specific adenosine on the 28S rRNA.. The sequence is that of Ribosome-inactivating protein momordin I from Momordica charantia (Bitter gourd).